The sequence spans 92 residues: Small ribosomal subunit protein uS19 (92 aa).

The protein belongs to the universal ribosomal protein uS19 family.

In terms of biological role, protein S19 forms a complex with S13 that binds strongly to the 16S ribosomal RNA. This chain is Small ribosomal subunit protein uS19, found in Rickettsia typhi (strain ATCC VR-144 / Wilmington).